The chain runs to 24 residues: U4-ctenitoxin-Co1b (24 aa).

Disulfide bonds are present. As to expression, expressed by the venom gland.

It localises to the secreted. Its function is as follows. Omega-agatoxins are antagonists of voltage-gated calcium channels (Cav). This is U4-ctenitoxin-Co1b from Ctenus ornatus (Brazilian spider).